The sequence spans 172 residues: Protein GrpE (172 aa).

Positions 1–23 (MNQDHPECDSEELTQNSPETDPL) are disordered.

It belongs to the GrpE family. As to quaternary structure, homodimer.

Its subcellular location is the cytoplasm. In terms of biological role, participates actively in the response to hyperosmotic and heat shock by preventing the aggregation of stress-denatured proteins, in association with DnaK and GrpE. It is the nucleotide exchange factor for DnaK and may function as a thermosensor. Unfolded proteins bind initially to DnaJ; upon interaction with the DnaJ-bound protein, DnaK hydrolyzes its bound ATP, resulting in the formation of a stable complex. GrpE releases ADP from DnaK; ATP binding to DnaK triggers the release of the substrate protein, thus completing the reaction cycle. Several rounds of ATP-dependent interactions between DnaJ, DnaK and GrpE are required for fully efficient folding. In Xylella fastidiosa (strain 9a5c), this protein is Protein GrpE.